We begin with the raw amino-acid sequence, 1109 residues long: Protein translocase subunit SecA (1109 aa).

Residues Gln175, 193–197 (GEGKT), and Asp695 contribute to the ATP site. A disordered region spans residues 1038–1109 (VRQAAPEQRQ…KYKNCHGRNS (72 aa)). 2 stretches are compositionally biased toward basic and acidic residues: residues 1045–1059 (QRQD…KQDL) and 1071–1088 (DTRE…KTVG). Positions 1093, 1095, 1104, and 1105 each coordinate Zn(2+). The span at 1099 to 1109 (KKYKNCHGRNS) shows a compositional bias: basic residues.

The protein belongs to the SecA family. Monomer and homodimer. Part of the essential Sec protein translocation apparatus which comprises SecA, SecYEG and auxiliary proteins SecDF. Other proteins may also be involved. Zn(2+) serves as cofactor.

The protein resides in the cell inner membrane. It is found in the cytoplasm. It carries out the reaction ATP + H2O + cellular proteinSide 1 = ADP + phosphate + cellular proteinSide 2.. Its function is as follows. Part of the Sec protein translocase complex. Interacts with the SecYEG preprotein conducting channel. Has a central role in coupling the hydrolysis of ATP to the transfer of proteins into and across the cell membrane, serving as an ATP-driven molecular motor driving the stepwise translocation of polypeptide chains across the membrane. The polypeptide is Protein translocase subunit SecA (Bacteroides fragilis (strain ATCC 25285 / DSM 2151 / CCUG 4856 / JCM 11019 / LMG 10263 / NCTC 9343 / Onslow / VPI 2553 / EN-2)).